The following is a 188-amino-acid chain: Glutamyl endopeptidase 2 (188 aa).

The cysteines at positions 14 and 34 are disulfide-linked. Residues His33, Asp62, and Ser143 each act as charge relay system in the active site. A disulfide bridge connects residues Cys137 and Cys163.

This sequence belongs to the peptidase S1 family. In terms of assembly, monomer.

It catalyses the reaction Preferential cleavage: -Glu-|-Xaa- &gt;&gt; -Asp-|-Xaa-. Preference for Pro or Leu at P2 and Phe at P3. Cleavage of -Glu-|-Asp- and -Glu-|-Pro- bonds is slow.. Preferentially cleaves peptide bonds on the carboxyl-terminal side of glutamate. This chain is Glutamyl endopeptidase 2 (sprE), found in Streptomyces griseus.